The sequence spans 359 residues: S-adenosylmethionine:tRNA ribosyltransferase-isomerase (359 aa).

Belongs to the QueA family. As to quaternary structure, monomer.

It is found in the cytoplasm. It catalyses the reaction 7-aminomethyl-7-carbaguanosine(34) in tRNA + S-adenosyl-L-methionine = epoxyqueuosine(34) in tRNA + adenine + L-methionine + 2 H(+). It participates in tRNA modification; tRNA-queuosine biosynthesis. Transfers and isomerizes the ribose moiety from AdoMet to the 7-aminomethyl group of 7-deazaguanine (preQ1-tRNA) to give epoxyqueuosine (oQ-tRNA). This chain is S-adenosylmethionine:tRNA ribosyltransferase-isomerase, found in Ralstonia pickettii (strain 12J).